A 231-amino-acid polypeptide reads, in one-letter code: Phosphoglycolate phosphatase, plasmid (231 aa).

The active-site Nucleophile is the Asp-14. 3 residues coordinate Mg(2+): Asp-14, Asp-16, and Asp-175.

Belongs to the HAD-like hydrolase superfamily. CbbY/CbbZ/Gph/YieH family. As to quaternary structure, homotrimer. Requires Mg(2+) as cofactor.

It carries out the reaction 2-phosphoglycolate + H2O = glycolate + phosphate. The protein operates within organic acid metabolism; glycolate biosynthesis; glycolate from 2-phosphoglycolate: step 1/1. Specifically catalyzes the dephosphorylation of 2-phosphoglycolate. Is involved in the dissimilation of the intracellular 2-phosphoglycolate formed during the DNA repair of 3'-phosphoglycolate ends, a major class of DNA lesions induced by oxidative stress. The chain is Phosphoglycolate phosphatase, plasmid (cbbZP) from Cupriavidus necator (strain ATCC 17699 / DSM 428 / KCTC 22496 / NCIMB 10442 / H16 / Stanier 337) (Ralstonia eutropha).